The sequence spans 288 residues: Aquaporin PIP1-5 (288 aa).

A disordered region spans residues 1–36; it reads MEGKEEDVRLGANRYSERQPIGTAAQGTEEKDYKEP. The next 2 helical transmembrane spans lie at 57-77 and 92-114; these read IAEF…VMGV and IAWS…SGGH. Positions 116-118 match the NPA 1 motif; that stretch reads NPA. Transmembrane regions (helical) follow at residues 135–155, 177–197, and 211–231; these read LFYM…VKGF, GDGL…VFSA, and ILAP…TIPI. The NPA 2 motif lies at 237 to 239; sequence NPA. Residues 259–279 form a helical membrane-spanning segment; the sequence is IFWVGPFIGAALAAIYHVVII.

Belongs to the MIP/aquaporin (TC 1.A.8) family. PIP (TC 1.A.8.11) subfamily. Highly expressed in roots and at lower levels in anthers and silks.

Its subcellular location is the cell membrane. Functionally, water channel required to facilitate the transport of water across cell membrane. This is Aquaporin PIP1-5 (PIP1-5) from Zea mays (Maize).